The sequence spans 141 residues: Nucleoside diphosphate kinase (141 aa).

Positions 11, 59, 87, 93, 104, and 114 each coordinate ATP. His117 acts as the Pros-phosphohistidine intermediate in catalysis.

This sequence belongs to the NDK family. As to quaternary structure, homotetramer. It depends on Mg(2+) as a cofactor.

Its subcellular location is the cytoplasm. The catalysed reaction is a 2'-deoxyribonucleoside 5'-diphosphate + ATP = a 2'-deoxyribonucleoside 5'-triphosphate + ADP. It catalyses the reaction a ribonucleoside 5'-diphosphate + ATP = a ribonucleoside 5'-triphosphate + ADP. Its function is as follows. Major role in the synthesis of nucleoside triphosphates other than ATP. The ATP gamma phosphate is transferred to the NDP beta phosphate via a ping-pong mechanism, using a phosphorylated active-site intermediate. The chain is Nucleoside diphosphate kinase from Vibrio parahaemolyticus serotype O3:K6 (strain RIMD 2210633).